The primary structure comprises 261 residues: Polycomb group RING finger protein 1 (261 aa).

An RING-type zinc finger spans residues 45 to 84 (CYLCAGYFIDATTITECLHTFCKSCIVKYLQTSKYCPMCN).

As to quaternary structure, component of a PRC1-like complex.

The protein localises to the nucleus. Component of a Polycomb group (PcG) multiprotein PRC1-like complex, a complex class required to maintain the transcriptionally repressive state of many genes, including Hox genes, throughout development. PcG PRC1 complex acts via chromatin remodeling and modification of histones; it mediates monoubiquitination of histone H2A 'Lys-119', rendering chromatin heritably changed in its expressibility. This chain is Polycomb group RING finger protein 1 (pcgf1), found in Danio rerio (Zebrafish).